We begin with the raw amino-acid sequence, 38 residues long: Cytochrome b6-f complex subunit 5 (38 aa).

The helical transmembrane segment at 5–25 threads the bilayer; the sequence is LLCGIVLGLIPVTLLGLFVAA.

This sequence belongs to the PetG family. The 4 large subunits of the cytochrome b6-f complex are cytochrome b6, subunit IV (17 kDa polypeptide, PetD), cytochrome f and the Rieske protein, while the 4 small subunits are PetG, PetL, PetM and PetN. The complex functions as a dimer.

It localises to the cellular thylakoid membrane. Component of the cytochrome b6-f complex, which mediates electron transfer between photosystem II (PSII) and photosystem I (PSI), cyclic electron flow around PSI, and state transitions. PetG is required for either the stability or assembly of the cytochrome b6-f complex. This chain is Cytochrome b6-f complex subunit 5, found in Parasynechococcus marenigrum (strain WH8102).